Reading from the N-terminus, the 789-residue chain is Disintegrin and metalloproteinase domain-containing protein 1 (789 aa).

An N-terminal signal peptide occupies residues 1–68; the sequence is MSVAASASRS…LLIFLPSTLC (68 aa). Positions 238 to 432 constitute a Peptidase M12B domain; sequence KYVEMFVVVN…HRGACLLDRP (195 aa). An N-linked (GlcNAc...) asparagine glycan is attached at N259. 4 cysteine pairs are disulfide-bonded: C348–C427, C388–C411, C390–C396, and C497–C517. H373 serves as a coordination point for Zn(2+). Residue E374 is part of the active site. H377 and H383 together coordinate Zn(2+). The N-linked (GlcNAc...) asparagine glycan is linked to N410. The Disintegrin domain occupies 441–525; that stretch reads DAHCGNGVVE…ECPANSYMQD (85 aa). N633 carries an N-linked (GlcNAc...) asparagine glycan. The EGF-like domain maps to 666 to 700; the sequence is LQYDCHPQEMCHGNGVCNNFKHCHCDAGFSPPDCS. Cystine bridges form between C670–C682, C676–C688, and C690–C699. An N-linked (GlcNAc...) asparagine glycan is attached at N720. The chain crosses the membrane as a helical span at residues 743–763; it reads VVVLVVPIFLIVLLCCLMLIA. Residues 764–789 lie on the Cytoplasmic side of the membrane; it reads YLWSEVQEAVSPGSSSTTSSSESESD.

In terms of assembly, heterodimer with ADAM2/fertilin subunit beta.

It is found in the membrane. In terms of biological role, may be involved in sperm-egg fusion. The polypeptide is Disintegrin and metalloproteinase domain-containing protein 1 (Adam1) (Rattus norvegicus (Rat)).